Here is a 57-residue protein sequence, read N- to C-terminus: Small ribosomal subunit protein eS27 (57 aa).

Zn(2+) is bound by residues Cys-10, Cys-13, Cys-29, and Cys-32. Residues 10–32 (CGDCENEQVVFGKASSVVSCAVC) form a C4-type zinc finger.

It belongs to the eukaryotic ribosomal protein eS27 family. Part of the 30S ribosomal subunit. The cofactor is Zn(2+).

This chain is Small ribosomal subunit protein eS27, found in Halorubrum lacusprofundi (strain ATCC 49239 / DSM 5036 / JCM 8891 / ACAM 34).